A 318-amino-acid polypeptide reads, in one-letter code: Ribose-phosphate pyrophosphokinase 1 (318 aa).

ATP is bound by residues 43 to 45 and 102 to 103; these read DGE and RQ. Mg(2+)-binding residues include His136 and Asp176. The active site involves Lys199. Residues Arg201, Asp225, and 229-233 each bind D-ribose 5-phosphate; that span reads DTAGT.

It belongs to the ribose-phosphate pyrophosphokinase family. Class I subfamily. In terms of assembly, homohexamer. Mg(2+) serves as cofactor.

The protein resides in the cytoplasm. It carries out the reaction D-ribose 5-phosphate + ATP = 5-phospho-alpha-D-ribose 1-diphosphate + AMP + H(+). It participates in metabolic intermediate biosynthesis; 5-phospho-alpha-D-ribose 1-diphosphate biosynthesis; 5-phospho-alpha-D-ribose 1-diphosphate from D-ribose 5-phosphate (route I): step 1/1. Involved in the biosynthesis of the central metabolite phospho-alpha-D-ribosyl-1-pyrophosphate (PRPP) via the transfer of pyrophosphoryl group from ATP to 1-hydroxyl of ribose-5-phosphate (Rib-5-P). This Listeria monocytogenes serotype 4b (strain F2365) protein is Ribose-phosphate pyrophosphokinase 1.